Here is a 282-residue protein sequence, read N- to C-terminus: Bis(5'-nucleosyl)-tetraphosphatase, symmetrical (282 aa).

This sequence belongs to the Ap4A hydrolase family.

It catalyses the reaction P(1),P(4)-bis(5'-adenosyl) tetraphosphate + H2O = 2 ADP + 2 H(+). Functionally, hydrolyzes diadenosine 5',5'''-P1,P4-tetraphosphate to yield ADP. The polypeptide is Bis(5'-nucleosyl)-tetraphosphatase, symmetrical (Klebsiella pneumoniae subsp. pneumoniae (strain ATCC 700721 / MGH 78578)).